The following is a 430-amino-acid chain: Putative golgin subfamily A member 8D (430 aa).

Residues 2–217 (EWKLEQSMRE…LTAQLSLMAL (216 aa)) are a coiled coil. Disordered stretches follow at residues 138–158 (LREQ…QEER), 217–239 (LPGE…RPMP), 290–331 (PITK…GVAA), and 382–406 (PVQG…QDHQ). Residues 222–235 (HGGEHLDSEGEEAP) show a composition bias toward basic and acidic residues. Gly residues predominate over residues 303 to 316 (PGGGHHQAGPGQGG).

Belongs to the GOLGA8 family.

The chain is Putative golgin subfamily A member 8D (GOLGA8DP) from Homo sapiens (Human).